Here is a 110-residue protein sequence, read N- to C-terminus: Protein P2 (110 aa).

Polar residues predominate over residues 72–82 (KLPTTSGSSSA). The disordered stretch occupies residues 72–110 (KLPTTSGSSSAGAIVPAGSNTQGQYKAPPKKGIKRKYPA). The span at 99 to 110 (PPKKGIKRKYPA) shows a compositional bias: basic residues.

This Oryza sativa (Rice) protein is Protein P2.